Reading from the N-terminus, the 147-residue chain is uncharacterized protein (147 aa).

The disordered stretch occupies residues 23-48 (EEVSQPEPNTANDSSTEYKGKSKDDF). Residues 28 to 37 (PEPNTANDSS) show a composition bias toward polar residues. Residues 38-48 (TEYKGKSKDDF) show a composition bias toward basic and acidic residues. The chain crosses the membrane as a helical span at residues 85-105 (LMFCIIACSFICAIQFLFFII).

The protein resides in the membrane. This is an uncharacterized protein from Saccharomyces cerevisiae (strain ATCC 204508 / S288c) (Baker's yeast).